Reading from the N-terminus, the 55-residue chain is Large ribosomal subunit protein bL33 (55 aa).

The protein belongs to the bacterial ribosomal protein bL33 family.

This Renibacterium salmoninarum (strain ATCC 33209 / DSM 20767 / JCM 11484 / NBRC 15589 / NCIMB 2235) protein is Large ribosomal subunit protein bL33.